The chain runs to 178 residues: Large ribosomal subunit protein uL6 (178 aa).

It belongs to the universal ribosomal protein uL6 family. As to quaternary structure, part of the 50S ribosomal subunit.

In terms of biological role, this protein binds to the 23S rRNA, and is important in its secondary structure. It is located near the subunit interface in the base of the L7/L12 stalk, and near the tRNA binding site of the peptidyltransferase center. The sequence is that of Large ribosomal subunit protein uL6 from Exiguobacterium sibiricum (strain DSM 17290 / CCUG 55495 / CIP 109462 / JCM 13490 / 255-15).